We begin with the raw amino-acid sequence, 301 residues long: NTE family protein RssA (301 aa).

A PNPLA domain is found at 8–168 (LALGSGAARG…VNPIPISLTR (161 aa)). The GXSXG signature appears at 39–43 (GCSIG). Catalysis depends on Ser41, which acts as the Nucleophile. The active-site Proton acceptor is the Asp155. The DGA/G motif lies at 155–157 (DGA).

Belongs to the NTE family.

The chain is NTE family protein RssA (rssA) from Escherichia coli (strain K12).